The following is a 182-amino-acid chain: uncharacterized protein (182 aa).

An N-terminal signal peptide occupies residues 1 to 29 (MKKLLKKLVVLFLSSLVIIFNVWYFIICA). The helical transmembrane segment at 152–174 (WNLYFWTAASYNAVIFVFVLVIV) threads the bilayer.

The protein resides in the membrane. This is an uncharacterized protein from Bacillus subtilis (strain 168).